The sequence spans 342 residues: GTPase Obg (342 aa).

Positions 1 to 159 (MKFLDLCKVY…RTIWLRLKLI (159 aa)) constitute an Obg domain. The region spanning 160-327 (ADAGLLGLPN…VLRALWAEID (168 aa)) is the OBG-type G domain. GTP contacts are provided by residues 166–173 (GLPNAGKS), 191–195 (FTTLV), 212–215 (DIPG), 279–282 (NKID), and 308–310 (SGV). Residues Ser-173 and Thr-193 each contribute to the Mg(2+) site.

It belongs to the TRAFAC class OBG-HflX-like GTPase superfamily. OBG GTPase family. In terms of assembly, monomer. It depends on Mg(2+) as a cofactor.

Its subcellular location is the cytoplasm. Its function is as follows. An essential GTPase which binds GTP, GDP and possibly (p)ppGpp with moderate affinity, with high nucleotide exchange rates and a fairly low GTP hydrolysis rate. Plays a role in control of the cell cycle, stress response, ribosome biogenesis and in those bacteria that undergo differentiation, in morphogenesis control. This is GTPase Obg from Cereibacter sphaeroides (strain ATCC 17029 / ATH 2.4.9) (Rhodobacter sphaeroides).